The sequence spans 321 residues: Pheromone-regulated membrane protein 5 (321 aa).

The segment at 35-59 (SSSSSSSSLPLLSNSTSSSIIPSIT) is disordered. The chain crosses the membrane as a helical span at residues 81-101 (FIIVGGIAGVIFLAILLWWVI). Position 132 is a phosphoserine (Ser132). The segment covering 241–250 (TISSSSASSL) has biased composition (low complexity). The interval 241–321 (TISSSSASSL…HMLEGKEQDE (81 aa)) is disordered. Residues 253 to 264 (GNEKEVGEDIRK) show a composition bias toward basic and acidic residues. The segment covering 279–288 (SPESDGSVNR) has biased composition (polar residues). Phosphoserine is present on residues Ser282, Ser285, and Ser291. Positions 312 to 321 (HMLEGKEQDE) are enriched in basic and acidic residues. Lys317 is covalently cross-linked (Glycyl lysine isopeptide (Lys-Gly) (interchain with G-Cter in ubiquitin)).

It belongs to the PRM5 family.

The protein resides in the membrane. The protein is Pheromone-regulated membrane protein 5 (PRM5) of Saccharomyces cerevisiae (strain YJM789) (Baker's yeast).